An 822-amino-acid chain; its full sequence is Probable phosphoketolase (822 aa).

The protein belongs to the XFP family. It depends on thiamine diphosphate as a cofactor.

The polypeptide is Probable phosphoketolase (Nocardia farcinica (strain IFM 10152)).